We begin with the raw amino-acid sequence, 414 residues long: TAR DNA-binding protein 43 (414 aa).

Glycyl lysine isopeptide (Lys-Gly) (interchain with G-Cter in SUMO2) cross-links involve residues Lys79, Lys84, Lys95, Lys102, and Lys181. The Nuclear localization signal signature appears at 82–98 (KRKMDETDASSAVKVKR). RRM domains lie at 104 to 200 (SDLI…RCTE) and 191 to 262 (RKVF…NAEP). Ser183 is subject to Phosphoserine. Residues 216–414 (DVMDVFIPKP…MDSKSSGWGM (199 aa)) form an interaction with UBQLN2 region. The short motif at 239-250 (IAQSLCGEDLII) is the Nuclear export signal element. Positions 261–274 (EPKHNSNRQLERSG) are enriched in basic and acidic residues. 2 disordered regions span residues 261–303 (EPKH…GNNQ) and 341–373 (ASQQ…GNNS). Residue Lys263 forms a Glycyl lysine isopeptide (Lys-Gly) (interchain with G-Cter in SUMO2) linkage. Residues 275–303 (RFGGNPGGFGNQGGFGNSRGGGAGLGNNQ) are compositionally biased toward gly residues. A Phosphoserine modification is found at Ser292. The residue at position 293 (Arg293) is an Omega-N-methylarginine. The segment covering 342–358 (SQQNQSGPSGNNQNQGN) has biased composition (low complexity).

Homodimer. Homooligomer (via its N-terminal domain). Interacts with BRDT. Binds specifically to pyrimidine-rich motifs of TAR DNA and to single stranded TG repeated sequences. Binds to RNA, specifically to UG repeated sequences with a minimum of six contiguous repeats. Interacts with ATXN2; the interaction is RNA-dependent. Interacts with MATR3. Interacts with UBQLN2. Interacts with HNRNPA2B1. Interacts with ZNF106. Interacts with CNOT7/CAF1. Interacts with CRY2. Interacts with PPIA/CYPA; the interaction is dependent on RNA-binding activity of TARDBP and PPIase activity of PPIA/CYPA and acetylation of PPIA/CYPA at 'Lys-125' favors the interaction. Post-translationally, hyperphosphorylated in hippocampus, neocortex, and spinal cord from individuals affected with ALS and FTLDU. Phosphorylated upon cellular stress. In terms of processing, ubiquitinated in hippocampus, neocortex, and spinal cord from individuals affected with ALS and FTLDU. Cleaved to generate C-terminal fragments in hippocampus, neocortex, and spinal cord from individuals affected with ALS and FTLDU. Ubiquitously expressed. In particular, expression is high in pancreas, placenta, lung, genital tract and spleen.

Its subcellular location is the nucleus. It is found in the cytoplasm. The protein resides in the stress granule. It localises to the mitochondrion. Functionally, RNA-binding protein that is involved in various steps of RNA biogenesis and processing. Preferentially binds, via its two RNA recognition motifs RRM1 and RRM2, to GU-repeats on RNA molecules predominantly localized within long introns and in the 3'UTR of mRNAs. In turn, regulates the splicing of many non-coding and protein-coding RNAs including proteins involved in neuronal survival, as well as mRNAs that encode proteins relevant for neurodegenerative diseases. Plays a role in maintaining mitochondrial homeostasis by regulating the processing of mitochondrial transcripts. Also regulates mRNA stability by recruiting CNOT7/CAF1 deadenylase on mRNA 3'UTR leading to poly(A) tail deadenylation and thus shortening. In response to oxidative insult, associates with stalled ribosomes localized to stress granules (SGs) and contributes to cell survival. Also participates in the normal skeletal muscle formation and regeneration, forming cytoplasmic myo-granules and binding mRNAs that encode sarcomeric proteins. Plays a role in the maintenance of the circadian clock periodicity via stabilization of the CRY1 and CRY2 proteins in a FBXL3-dependent manner. Negatively regulates the expression of CDK6. Regulates the expression of HDAC6, ATG7 and VCP in a PPIA/CYPA-dependent manner. The protein is TAR DNA-binding protein 43 of Homo sapiens (Human).